The primary structure comprises 362 residues: UDP-N-acetylglucosamine--N-acetylmuramyl-(pentapeptide) pyrophosphoryl-undecaprenol N-acetylglucosamine transferase (362 aa).

UDP-N-acetyl-alpha-D-glucosamine is bound by residues threonine 15–glycine 17, asparagine 127, arginine 165, serine 191, isoleucine 247, alanine 266–glutamate 271, and glutamine 292.

The protein belongs to the glycosyltransferase 28 family. MurG subfamily.

The protein localises to the cell inner membrane. The enzyme catalyses di-trans,octa-cis-undecaprenyl diphospho-N-acetyl-alpha-D-muramoyl-L-alanyl-D-glutamyl-meso-2,6-diaminopimeloyl-D-alanyl-D-alanine + UDP-N-acetyl-alpha-D-glucosamine = di-trans,octa-cis-undecaprenyl diphospho-[N-acetyl-alpha-D-glucosaminyl-(1-&gt;4)]-N-acetyl-alpha-D-muramoyl-L-alanyl-D-glutamyl-meso-2,6-diaminopimeloyl-D-alanyl-D-alanine + UDP + H(+). It functions in the pathway cell wall biogenesis; peptidoglycan biosynthesis. Its function is as follows. Cell wall formation. Catalyzes the transfer of a GlcNAc subunit on undecaprenyl-pyrophosphoryl-MurNAc-pentapeptide (lipid intermediate I) to form undecaprenyl-pyrophosphoryl-MurNAc-(pentapeptide)GlcNAc (lipid intermediate II). The protein is UDP-N-acetylglucosamine--N-acetylmuramyl-(pentapeptide) pyrophosphoryl-undecaprenol N-acetylglucosamine transferase of Shewanella sp. (strain MR-4).